The following is a 221-amino-acid chain: Deoxyribose-phosphate aldolase (221 aa).

The active-site Proton donor/acceptor is Asp-89. Lys-151 (schiff-base intermediate with acetaldehyde) is an active-site residue. Residue Lys-180 is the Proton donor/acceptor of the active site.

The protein belongs to the DeoC/FbaB aldolase family. DeoC type 1 subfamily.

The protein localises to the cytoplasm. The enzyme catalyses 2-deoxy-D-ribose 5-phosphate = D-glyceraldehyde 3-phosphate + acetaldehyde. It participates in carbohydrate degradation; 2-deoxy-D-ribose 1-phosphate degradation; D-glyceraldehyde 3-phosphate and acetaldehyde from 2-deoxy-alpha-D-ribose 1-phosphate: step 2/2. Functionally, catalyzes a reversible aldol reaction between acetaldehyde and D-glyceraldehyde 3-phosphate to generate 2-deoxy-D-ribose 5-phosphate. In Brevibacillus brevis (strain 47 / JCM 6285 / NBRC 100599), this protein is Deoxyribose-phosphate aldolase.